The primary structure comprises 598 residues: Probable ATP-dependent RNA helicase DDX52 (598 aa).

N6-acetyllysine is present on Lys-15. At Ser-39 the chain carries Phosphoserine. The tract at residues 59-98 (CGGLQTQQELQNEETTEGGLLERSKEPKKKKRKKMTADVP) is disordered. A Q motif motif is present at residues 166–194 (QLDQEYKISPRLLQNILDAGFQVPTPIQM). The Helicase ATP-binding domain maps to 197 to 375 (IPVMLHGREL…KLNLDNIVSV (179 aa)). 210 to 217 (APTGSGKT) provides a ligand contact to ATP. Residues 319 to 322 (DESD) carry the DEAD box motif. Residues 386–547 (TVEQELLFVG…PVPEYIKGFQ (162 aa)) enclose the Helicase C-terminal domain. The tract at residues 578–598 (AKQKKVAGQNSKKKETLKGKS) is disordered. A compositionally biased stretch (basic and acidic residues) spans 589 to 598 (KKKETLKGKS).

Belongs to the DEAD box helicase family. DDX52/ROK1 subfamily.

It is found in the nucleus. It localises to the nucleolus. The enzyme catalyses ATP + H2O = ADP + phosphate + H(+). Required for efficient ribosome biogenesis. May control cell cycle progression by regulating translation of mRNAs that contain a terminal oligo pyrimidine (TOP) motif in their 5' UTRs, such as GTPBP4. This chain is Probable ATP-dependent RNA helicase DDX52 (Ddx52), found in Rattus norvegicus (Rat).